The following is a 371-amino-acid chain: Archaeal glycosylation protein Q (371 aa).

The tract at residues 19–39 (QRSDGSMPAGHNGPYHDPETP) is disordered.

It is found in the cytoplasm. Its pathway is cell surface structure biogenesis; S-layer biogenesis. Functionally, putative isomerase involved in the N-glycosylation pathway. Required for the appearance of the methyl ester of hexuronic acid found at position four of the pentasaccharide N-linked to the S-layer glycoprotein. Either involved in preparing the third sugar for attachment of the fourth pentasaccharide subunit or processing the fourth sugar prior to its addition to the lipid-linked trisaccharide. The sequence is that of Archaeal glycosylation protein Q (aglQ) from Haloferax volcanii (strain ATCC 29605 / DSM 3757 / JCM 8879 / NBRC 14742 / NCIMB 2012 / VKM B-1768 / DS2) (Halobacterium volcanii).